We begin with the raw amino-acid sequence, 262 residues long: Glucosamine-6-phosphate deaminase (262 aa).

The Proton acceptor; for enolization step role is filled by aspartate 63. Asparagine 129 acts as the For ring-opening step in catalysis. Catalysis depends on histidine 131, which acts as the Proton acceptor; for ring-opening step. Residue glutamate 136 is the For ring-opening step of the active site.

It belongs to the glucosamine/galactosamine-6-phosphate isomerase family. NagB subfamily.

It carries out the reaction alpha-D-glucosamine 6-phosphate + H2O = beta-D-fructose 6-phosphate + NH4(+). It participates in amino-sugar metabolism; N-acetylneuraminate degradation; D-fructose 6-phosphate from N-acetylneuraminate: step 5/5. Its function is as follows. Catalyzes the reversible isomerization-deamination of glucosamine 6-phosphate (GlcN6P) to form fructose 6-phosphate (Fru6P) and ammonium ion. This is Glucosamine-6-phosphate deaminase from Bacillus cereus (strain B4264).